The sequence spans 102 residues: Phosphoribosyl-ATP pyrophosphatase (102 aa).

It belongs to the PRA-PH family.

Its subcellular location is the cytoplasm. It catalyses the reaction 1-(5-phospho-beta-D-ribosyl)-ATP + H2O = 1-(5-phospho-beta-D-ribosyl)-5'-AMP + diphosphate + H(+). It participates in amino-acid biosynthesis; L-histidine biosynthesis; L-histidine from 5-phospho-alpha-D-ribose 1-diphosphate: step 2/9. The chain is Phosphoribosyl-ATP pyrophosphatase from Jannaschia sp. (strain CCS1).